Here is a 66-residue protein sequence, read N- to C-terminus: Sarcoplasmic/endoplasmic reticulum calcium ATPase regulator ARLN (66 aa).

Position 1 is an N-acetylmethionine (M1). The interval 1 to 38 (MEVDVPGVDGRDGLRERRGLSEGGRQNLDVRPQSGANG) is disordered. Basic and acidic residues predominate over residues 9–20 (DGRDGLRERRGL). Residues 45–65 (WLDLWLFIFFDVVVFLFVYFL) traverse the membrane as a helical segment.

Homooligomer. Can also form heterooligomers with other sarcoplasmic/endoplasmic reticulum calcium ATPase (SERCA) regulators ERLN, PLN, SLN and STRIT1/DWORF. Monomer. Interacts as a monomer with ATP2A2/SERCA2; the interaction results in inhibition of ATP2A2 Ca(2+) affinity.

The protein localises to the endoplasmic reticulum membrane. Inhibits the activity of the calcium ATPases ATP2A2/SERCA2 and ATP2A3/SERCA3 by decreasing their apparent affinity for Ca(2+). The polypeptide is Sarcoplasmic/endoplasmic reticulum calcium ATPase regulator ARLN (ARLN) (Pongo abelii (Sumatran orangutan)).